A 227-amino-acid polypeptide reads, in one-letter code: Uracil-DNA glycosylase (227 aa).

Aspartate 68 serves as the catalytic Proton acceptor.

Belongs to the uracil-DNA glycosylase (UDG) superfamily. UNG family.

It localises to the cytoplasm. The enzyme catalyses Hydrolyzes single-stranded DNA or mismatched double-stranded DNA and polynucleotides, releasing free uracil.. In terms of biological role, excises uracil residues from the DNA which can arise as a result of misincorporation of dUMP residues by DNA polymerase or due to deamination of cytosine. In Mycobacterium sp. (strain JLS), this protein is Uracil-DNA glycosylase.